The following is a 757-amino-acid chain: RNA-directed RNA polymerase catalytic subunit (757 aa).

The segment at 50-79 (SEKGKWTTNTETGEPQLNPIDGPLPEDNEQ) is disordered. Polar residues predominate over residues 55–64 (WTTNTETGEP). Short sequence motifs (nuclear localization signal) lie at residues 187 to 195 (RKRRVRDNM) and 203 to 216 (RTIGKKKQRVNKRS). Positions 249 to 256 (RGFVYFVE) are promoter-binding site. Residues 286–483 (VRKMMTNSQD…GINMSKKKSY (198 aa)) enclose the RdRp catalytic domain.

It belongs to the influenza viruses polymerase PB1 family. Influenza RNA polymerase is composed of three subunits: PB1, PB2 and PA. Interacts (via N-terminus) with PA (via C-terminus). Interacts (via C-terminus) with PB2 (via N-terminus); this interaction is essential for transcription initiation. In terms of processing, phosphorylated by host PRKCA.

It is found in the host nucleus. The protein resides in the host cytoplasm. The catalysed reaction is RNA(n) + a ribonucleoside 5'-triphosphate = RNA(n+1) + diphosphate. Its function is as follows. RNA-dependent RNA polymerase which is responsible for replication and transcription of virus RNA segments. The transcription of viral mRNAs occurs by a unique mechanism called cap-snatching. 5' methylated caps of cellular mRNAs are cleaved after 10-13 nucleotides by PA. In turn, these short capped RNAs are used as primers by PB1 for transcription of viral mRNAs. During virus replication, PB1 initiates RNA synthesis and copy vRNA into complementary RNA (cRNA) which in turn serves as a template for the production of more vRNAs. This is RNA-directed RNA polymerase catalytic subunit from Influenza A virus (strain A/Dunedin/4/1973 H3N2).